Here is a 249-residue protein sequence, read N- to C-terminus: Phycobilisome 27.9 kDa linker polypeptide, phycoerythrin-associated, rod (249 aa).

The 165-residue stretch at Ala-2 to Ser-166 folds into the PBS-linker domain. A CpcD-like domain is found at Glu-198 to Ile-248.

Belongs to the phycobilisome linker protein family. In terms of assembly, the phycobilisome is a hemidiscoidal structure that is composed of two distinct substructures: a core complex and six rods radiating from the core.

The protein resides in the cellular thylakoid membrane. Rod linker protein, associated with phycoerythrin. Linker polypeptides determine the state of aggregation and the location of the disk-shaped phycobiliprotein units within the phycobilisome and modulate their spectroscopic properties in order to mediate a directed and optimal energy transfer. This chain is Phycobilisome 27.9 kDa linker polypeptide, phycoerythrin-associated, rod (cpeD), found in Microchaete diplosiphon (Fremyella diplosiphon).